The chain runs to 141 residues: Large ribosomal subunit protein uL11 (141 aa).

It belongs to the universal ribosomal protein uL11 family. As to quaternary structure, part of the ribosomal stalk of the 50S ribosomal subunit. Interacts with L10 and the large rRNA to form the base of the stalk. L10 forms an elongated spine to which L12 dimers bind in a sequential fashion forming a multimeric L10(L12)X complex. In terms of processing, one or more lysine residues are methylated.

Its function is as follows. Forms part of the ribosomal stalk which helps the ribosome interact with GTP-bound translation factors. In Herpetosiphon aurantiacus (strain ATCC 23779 / DSM 785 / 114-95), this protein is Large ribosomal subunit protein uL11.